Here is a 583-residue protein sequence, read N- to C-terminus: Sensor protein SrrB (583 aa).

Topologically, residues 1-11 are cytoplasmic; the sequence is MMSRLNSVVIK. A helical membrane pass occupies residues 12-32; it reads LWLTIILIVTTVLILLSIALI. At 33 to 174 the chain is on the extracellular side; it reads TFMQYYFTQE…SIEDTNNAIT (142 aa). Residues 175 to 195 form a helical membrane-spanning segment; it reads IITIITAVIFLTITTVFAFFL. At 196–583 the chain is on the cytoplasmic side; it reads SSRITKPLRR…TFIIKLPKPE (388 aa). One can recognise an HAMP domain in the interval 197–249; that stretch reads SRITKPLRRLRDQATRVSEGDYSYKPSVTTKDEIGQLSQAFNQMSTEIEEHVD. Residues 366 to 583 enclose the Histidine kinase domain; sequence NVSHELRTPI…TFIIKLPKPE (218 aa). His-369 is subject to Phosphohistidine; by autocatalysis.

It is found in the cell membrane. The enzyme catalyses ATP + protein L-histidine = ADP + protein N-phospho-L-histidine.. In terms of biological role, member of the two-component regulatory system SrrA/SrrB, which is involved in the global regulation of staphylococcal virulence factors in response to environmental oxygen levels as well as biofilm formation. Also plays an essential role in host-derived nitric oxide resistance by regulating hmp/flavohemoglobin, an enzyme that detoxifies nitric oxide by converting it to nitrate. Functions as a sensor protein kinase which is autophosphorylated at a histidine residue and transfers its phosphate group to SrrA. In turn, SrrA binds to the upstream promoter regions of the target genes to positively and negatively regulate their expression. The polypeptide is Sensor protein SrrB (srrB) (Staphylococcus aureus (strain MRSA252)).